The following is a 23-amino-acid chain: M-poneritoxin-Nc1a (23 aa).

It belongs to the non-disulfide-bridged peptide (NDBP) superfamily. Medium-length antimicrobial peptide (group 3) family. Ponericin-W subfamily. As to expression, expressed by the venom gland.

The protein localises to the secreted. It is found in the target cell membrane. Its function is as follows. Membrane-perturbating peptide with multiple activities. It is insecticidal, since it induces contractile paralysis in insects (L.cuprina) during several hours, and death after 24 hours. It shows antibacterial activity with higher activity against Gram-positive than Gram-negative bacteria. It is also antiparasitic, since it potently inhibits the larval development of the major pathogenic nematode of ruminants (H.contortus, IC(50)=5.1 uM), but fails to reduce the motility of adult males of the other nematode B.malayi. It also shows cytotoxic activity against HEK293 cells (EC(50)=12-14 uM) and induces hemolysis in human erythrocytes (EC(50)=28.6-48.2 uM). In addition, it causes an important increase in intracellular calcium concentration on neuronal and epithelial cell lines, which supports a non-specific membrane perturbation mechanism of action. In vivo, it induces pain by intraplantar injection into mice, suggesting a defensive function against vertebrate predators. This chain is M-poneritoxin-Nc1a, found in Neoponera commutata (Large hunting ant).